Here is a 145-residue protein sequence, read N- to C-terminus: Bacilliredoxin BrxB (145 aa).

Residues Cys52 and Cys54 each act as nucleophile in the active site. An S-bacillithiol cysteine disulfide modification is found at Cys52. Residues 52–54 (CGC) carry the CXC active site motif motif. Cysteines 52 and 54 form a disulfide.

It belongs to the bacilliredoxin family. In terms of assembly, interacts with BrxC. In terms of processing, N-terminal Cys of the CXC active site motif can react with bacillithiol (BSH) to form mixed disulfides. S-bacillithiolation protects Cys residues against overoxidation by acting as a redox switch in response to oxidative stress.

In terms of biological role, S-bacillithiolation is the formation of mixed disulfide bonds between protein thiols and the general thiol reductant bacillithiol (BSH) under oxidative stress. BSH is an equivalent of glutathione (GSH) in Firmicutes. This protein is a dithiol bacilliredoxin, which debacillithiolates (removes BSH) the S-bacillithiolated OhrR (OhrR-SSB) in vitro and in vivo NaOCl-generated S-bacillithiolated MetE (MetE-SSB). Involved in maintaining redox homeostasis in response to disulfide stress conditions. This is Bacilliredoxin BrxB from Bacillus subtilis (strain 168).